We begin with the raw amino-acid sequence, 405 residues long: Arginine deiminase (405 aa).

C395 serves as the catalytic Amidino-cysteine intermediate.

The protein belongs to the arginine deiminase family.

It is found in the cytoplasm. The catalysed reaction is L-arginine + H2O = L-citrulline + NH4(+). The protein operates within amino-acid degradation; L-arginine degradation via ADI pathway; carbamoyl phosphate from L-arginine: step 1/2. The protein is Arginine deiminase of Rhodococcus erythropolis (strain PR4 / NBRC 100887).